We begin with the raw amino-acid sequence, 504 residues long: Crh-like protein CRH12 (504 aa).

Positions 1–18 are cleaved as a signal peptide; that stretch reads MYKQILTFLILFLRYILS. Positions 19–270 constitute a GH16 domain; the sequence is EFPDDPYEDD…YSKALTYSYG (252 aa). Asn34 is a glycosylation site (N-linked (GlcNAc...) asparagine). Cys43 and Cys51 are joined by a disulfide. The active-site Nucleophile is Glu138. Residue Glu143 is the Proton donor of the active site. Residue Glu143 coordinates chitin. A glycan (N-linked (GlcNAc...) asparagine) is linked at Asn161. Residues Lys221, Trp225, and Thr234 each contribute to the chitin site. The tract at residues 304-404 is disordered; sequence KPTPKQETDD…LDISTQLPPL (101 aa). Residues 316–329 show a composition bias toward polar residues; the sequence is VLTSSKSQRVATTI. The segment covering 356–378 has biased composition (acidic residues); that stretch reads WETEQDETGTDDTENSDNEEEES. Asn407, Asn416, and Asn425 each carry an N-linked (GlcNAc...) asparagine glycan. Gly479 carries the GPI-anchor amidated glycine lipid modification. The propeptide at 480 to 504 is removed in mature form; the sequence is VSSILATSFSSVVIAEILVIVVLLL.

It belongs to the glycosyl hydrolase 16 family. CRH1 subfamily. In terms of processing, the GPI-anchor is attached to the protein in the endoplasmic reticulum and serves to target the protein to the cell surface. There, the glucosamine-inositol phospholipid moiety is cleaved off and the GPI-modified mannoprotein is covalently attached via its lipidless GPI glycan remnant to the 1,6-beta-glucan of the outer cell wall layer.

Its subcellular location is the secreted. The protein resides in the cell wall. It localises to the membrane. It carries out the reaction Random endo-hydrolysis of N-acetyl-beta-D-glucosaminide (1-&gt;4)-beta-linkages in chitin and chitodextrins.. Functionally, dual chitinase/transglycosylase that plays a role in cell wall architecture. Chitinase and transglycosylase activities are coupled. Required for the polysaccharide cross-linking at the septa and the cell wall. More specifically, transfers chitin to 1,6-beta-glucan in the cell wall. Plays an important role in fungal pathogenesis via its functions in cell wall assembly and regeneration, filamentation, and adherence to host cells. This chain is Crh-like protein CRH12 (CRH12), found in Candida albicans (strain SC5314 / ATCC MYA-2876) (Yeast).